The primary structure comprises 116 residues: CDKN2AIP N-terminal-like protein (116 aa).

At M1 the chain carries N-acetylmethionine. An XRN2-binding (XTBD) domain is found at 24-116 (AEQFRSYSES…RSELMKKHQS (93 aa)).

Belongs to the CARF family. In terms of assembly, interacts with XRN2; the interaction is direct.

The chain is CDKN2AIP N-terminal-like protein (CDKN2AIPNL) from Homo sapiens (Human).